A 95-amino-acid polypeptide reads, in one-letter code: RING finger protein Z (95 aa).

Positions 1–17 are enriched in polar residues; sequence MGNCNRTQKPSSSSNNL. The tract at residues 1-25 is disordered; sequence MGNCNRTQKPSSSSNNLEKPPQAAE. A lipid anchor (N-myristoyl glycine; by host) is attached at Gly-2. The segment at 40-76 adopts an RING-type; atypical zinc-finger fold; that stretch reads CKCCWFADKNLITCSDHYLCLRCHQIMLRNSELCNIC. Residues 90 to 93 carry the ASAP motif motif; that stretch reads ASAP.

Belongs to the arenaviridae Z protein family. Interacts with protein NP; this interaction probably directs the encapsidated genome to budding sites. Interacts (via RING domain) with polymerase L; this interaction inhibits viral transcription and replication, Z partially blocks the product exit tunnel for the releasing nascent RNA product. Interacts with the glycoprotein complex; this interaction plays a role in virion budding. Interacts with host eIF4E; this interaction results in eIF4E reduced affinity for its substrate, the 5'-m7 G cap structure. Interacts (via late-budding domain) with host TSG101; this interaction is essential for budding and release of viral particles. Interacts with host RPLP0; this interaction may serve to load ribosome-like particles inside the virion. Interacts with host PML; this interaction induces PML bodies redistribution in the cytoplasm upon viral infection. In terms of processing, myristoylation is required for the role of RING finger protein Z in assembly and budding.

The protein localises to the virion. Its subcellular location is the host cytoplasm. It localises to the host perinuclear region. It is found in the host cell membrane. Functionally, plays a crucial role in virion assembly and budding. Expressed late in the virus life cycle, it acts as an inhibitor of viral transcription and RNA synthesis by interacting with the viral polymerase L. Presumably recruits the NP encapsidated genome to cellular membranes at budding sites via direct interaction with NP. Plays critical roles in the final steps of viral release by interacting with host TSG101, a member of the vacuolar protein-sorting pathway and using other cellular host proteins involved in vesicle formation pathway. The budding of the virus progeny occurs after association of protein Z with the viral glycoprotein complex SSP-GP1-GP2 at the cell periphery, step that requires myristoylation of protein Z. Also selectively represses protein production by associating with host eIF4E. In cell-based minigenome assay, has an inhibitory effect on the ribonucleoprotein machinery (vRNP), which is responsible for the replication and transcription of the viral genome. This chain is RING finger protein Z, found in Tacaribe virus (strain Franze-Fernandez) (TCRV).